The following is a 251-amino-acid chain: Ubiquitin-conjugating enzyme E2 6 (251 aa).

Topologically, residues 1–229 (MASIQANKRL…DQDKNPGENS (229 aa)) are cytoplasmic. Residues 5-154 (QANKRLTKEY…YSNFKFKNMF (150 aa)) form the UBC core domain. The active-site Glycyl thioester intermediate is cysteine 87. Basic and acidic residues predominate over residues 173–185 (AESKGAQQEENKA). The interval 173–200 (AESKGAQQEENKAQKLATEKATSLDDIS) is disordered. A helical transmembrane segment spans residues 230-250 (NIKSLLCLILAIAIFFVGLIM).

The protein belongs to the ubiquitin-conjugating enzyme family.

It localises to the endoplasmic reticulum membrane. The enzyme catalyses S-ubiquitinyl-[E1 ubiquitin-activating enzyme]-L-cysteine + [E2 ubiquitin-conjugating enzyme]-L-cysteine = [E1 ubiquitin-activating enzyme]-L-cysteine + S-ubiquitinyl-[E2 ubiquitin-conjugating enzyme]-L-cysteine.. It participates in protein modification; protein ubiquitination. Catalyzes the covalent attachment of ubiquitin to other proteins. Functions in degradation of misfolded or regulated proteins localized in the endoplasmic reticulum (ER) lumen or membrane via the ubiquitin-proteasome system. Cognate E2 conjugating enzyme for the DOA10 ubiquitin ligase complex, which is part of the ERAD-C pathway responsible for the rapid degradation of membrane proteins with misfolded cytoplasmic domains. The protein is Ubiquitin-conjugating enzyme E2 6 (UBC6) of Kluyveromyces lactis (strain ATCC 8585 / CBS 2359 / DSM 70799 / NBRC 1267 / NRRL Y-1140 / WM37) (Yeast).